The sequence spans 196 residues: GTP cyclohydrolase 1 (196 aa).

Zn(2+) contacts are provided by C85, H88, and C158.

Belongs to the GTP cyclohydrolase I family. As to quaternary structure, homomer.

The enzyme catalyses GTP + H2O = 7,8-dihydroneopterin 3'-triphosphate + formate + H(+). It functions in the pathway cofactor biosynthesis; 7,8-dihydroneopterin triphosphate biosynthesis; 7,8-dihydroneopterin triphosphate from GTP: step 1/1. This is GTP cyclohydrolase 1 from Corynebacterium aurimucosum (strain ATCC 700975 / DSM 44827 / CIP 107346 / CN-1) (Corynebacterium nigricans).